The chain runs to 301 residues: Probable alpha-L-glutamate ligase (301 aa).

The ATP-grasp domain maps to 104 to 287 (LQLLSRRGIG…VAGMIIEHLE (184 aa)). ATP contacts are provided by residues Lys-141, 178-179 (EY), Asp-187, and 211-213 (RSN). Positions 248, 260, and 262 each coordinate Mg(2+). Residues Asp-248, Glu-260, and Asn-262 each coordinate Mn(2+).

It belongs to the RimK family. Mg(2+) is required as a cofactor. Requires Mn(2+) as cofactor.

This is Probable alpha-L-glutamate ligase from Pseudomonas putida (strain GB-1).